The primary structure comprises 331 residues: Adenosine deaminase (331 aa).

Histidine 12 and histidine 14 together coordinate Zn(2+). Histidine 14, aspartate 16, and glycine 170 together coordinate substrate. Residue histidine 197 coordinates Zn(2+). Catalysis depends on glutamate 200, which acts as the Proton donor. Aspartate 278 contributes to the Zn(2+) binding site. Aspartate 279 provides a ligand contact to substrate.

The protein belongs to the metallo-dependent hydrolases superfamily. Adenosine and AMP deaminases family. Adenosine deaminase subfamily. Requires Zn(2+) as cofactor.

It carries out the reaction adenosine + H2O + H(+) = inosine + NH4(+). The catalysed reaction is 2'-deoxyadenosine + H2O + H(+) = 2'-deoxyinosine + NH4(+). Its function is as follows. Catalyzes the hydrolytic deamination of adenosine and 2-deoxyadenosine. This chain is Adenosine deaminase, found in Shewanella loihica (strain ATCC BAA-1088 / PV-4).